A 308-amino-acid polypeptide reads, in one-letter code: MVVTDGVVSLKHLVSMEILSNEEVLGLIKRGLAFKEKKVTFSLDRQYFAANLFFEASTRTHKSFEVAEKKLGLDVIEFDAKTSSVNKGETLYDTILTMSALGVDICVVRHSQDDYYKELIDSRTIQTSIVNGGDGSGQHPSQCLLDLMTIYDEFASFENLKIAIAGDITHSRVAKSNMQILKRLGAQIYFAGPKEWYSSEFDVYGKYVAIDDIINQIDVMMLLRVQHERHDGKESFSKKAYHQHYGLTEERYKQLKSSAIIMHPAPVNRDVEIADSLVEAPKSRIVAQMKNGVFVRMAILEAILRGKT.

Arg-59 and Thr-60 together coordinate carbamoyl phosphate. Lys-87 contacts L-aspartate. Carbamoyl phosphate-binding residues include Arg-109, His-139, and Gln-142. Residues Arg-172 and Arg-224 each coordinate L-aspartate. The carbamoyl phosphate site is built by Ala-265 and Pro-266.

It belongs to the aspartate/ornithine carbamoyltransferase superfamily. ATCase family. As to quaternary structure, heterododecamer (2C3:3R2) of six catalytic PyrB chains organized as two trimers (C3), and six regulatory PyrI chains organized as three dimers (R2).

It catalyses the reaction carbamoyl phosphate + L-aspartate = N-carbamoyl-L-aspartate + phosphate + H(+). It participates in pyrimidine metabolism; UMP biosynthesis via de novo pathway; (S)-dihydroorotate from bicarbonate: step 2/3. In terms of biological role, catalyzes the condensation of carbamoyl phosphate and aspartate to form carbamoyl aspartate and inorganic phosphate, the committed step in the de novo pyrimidine nucleotide biosynthesis pathway. The chain is Aspartate carbamoyltransferase catalytic subunit from Streptococcus mutans serotype c (strain ATCC 700610 / UA159).